We begin with the raw amino-acid sequence, 151 residues long: Small ribosomal subunit protein uS15 (151 aa).

Belongs to the universal ribosomal protein uS15 family.

The chain is Small ribosomal subunit protein uS15 (RpS13) from Anopheles gambiae (African malaria mosquito).